Reading from the N-terminus, the 721-residue chain is Xylosyl- and glucuronyltransferase LARGE2 (721 aa).

Residues 1-8 (MLPRGRPR) are Cytoplasmic-facing. The chain crosses the membrane as a helical; Signal-anchor for type II membrane protein span at residues 9–29 (ALGAAALLLLLLLLGFLLFGG). Residues 30–721 (DLGCERREPG…LQQPQSPARG (692 aa)) are Lumenal-facing. Residues 59 to 89 (DGRLRRAAALDGDPGAGPGDHNRSDCGPQPP) form a disordered region. N-linked (GlcNAc...) asparagine glycans are attached at residues Asn80 and Asn107. A xylosyltransferase activity region spans residues 97–372 (LHVAIVCAGH…FLEYDGNLLR (276 aa)). Residues Asp201 and Asp203 each coordinate Mn(2+). Asn231 carries an N-linked (GlcNAc...) asparagine glycan. The tract at residues 373–715 (RELFVCPSQP…LKYLPALQQP (343 aa)) is glucuronyltransferase activity. Residues Asp521 and Asp523 each coordinate Mn(2+).

The protein in the C-terminal section; belongs to the glycosyltransferase 49 family. This sequence in the N-terminal section; belongs to the glycosyltransferase 8 family. In terms of assembly, interacts with B4GAT1. Mn(2+) is required as a cofactor. In terms of tissue distribution, widely expressed. Expressed at high level in placenta, pancreas and kidney compared to LARGE. Not expressed in brain.

It localises to the golgi apparatus membrane. The enzyme catalyses 3-O-[beta-D-GlcA-(1-&gt;3)-beta-D-Xyl-(1-&gt;4)-Rib-ol-P-Rib-ol-P-3-beta-D-GalNAc-(1-&gt;3)-beta-D-GlcNAc-(1-&gt;4)-(O-6-P-alpha-D-Man)]-Thr-[protein] + UDP-alpha-D-xylose = 3-O-[alpha-D-Xyl-(1-&gt;3)-beta-D-GlcA-(1-&gt;4)-beta-D-Xyl-(1-&gt;4)-Rib-ol-P-Rib-ol-P-3-beta-D-GalNAc-(1-&gt;3)-beta-D-GlcNAc-(1-&gt;4)-(O-6-P-alpha-D-Man)]-Thr-[protein] + UDP + H(+). It carries out the reaction 3-O-{(1-&gt;[3)-alpha-D-Xyl-(1-&gt;3)-beta-D-GlcA-(1-&gt;](n)-4)-beta-D-Xyl-(1-&gt;4)-Rib-ol-P-Rib-ol-P-3-beta-D-GalNAc-(1-&gt;3)-beta-D-GlcNAc-(1-&gt;4)-O-6-P-alpha-D-Man}-L-Thr-[protein] + UDP-alpha-D-glucuronate = 3-O-{beta-D-GlcA-(1-&gt;[3)-alpha-D-Xyl-(1-&gt;3)-beta-D-GlcA-(1-&gt;](n)-4)-beta-D-Xyl-(1-&gt;4)-Rib-ol-P-Rib-ol-P-3-beta-D-GalNAc-(1-&gt;3)-beta-D-GlcNAc-(1-&gt;4)-O-6-P-alpha-D-Man}-L-Thr-[protein] + UDP + H(+). It catalyses the reaction 3-O-{beta-D-GlcA-(1-&gt;[3)-alpha-D-Xyl-(1-&gt;3)-beta-D-GlcA-(1-&gt;](n)-4)-beta-D-Xyl-(1-&gt;4)-Rib-ol-P-Rib-ol-P-3-beta-D-GalNAc-(1-&gt;3)-beta-D-GlcNAc-(1-&gt;4)-O-6-P-alpha-D-Man}-L-Thr-[protein] + UDP-alpha-D-xylose = 3-O-{(1-&gt;[3)-alpha-D-Xyl-(1-&gt;3)-beta-D-GlcA-(1-&gt;](n+1)-4)-beta-D-Xyl-(1-&gt;4)-Rib-ol-P-Rib-ol-P-3-beta-D-GalNAc-(1-&gt;3)-beta-D-GlcNAc-(1-&gt;4)-O-6-P-alpha-D-Man}-L-Thr-[protein] + UDP + H(+). It participates in protein modification; protein glycosylation. Functionally, bifunctional glycosyltransferase with both alpha-1,3-xylosyltransferase and beta-1,3-glucuronyltransferase activities involved in the maturation of alpha-dystroglycan (DAG1) by glycosylation leading to DAG1 binding to laminin G-like domain-containing extracellular proteins with high affinity and in a phosphorylated-O-mannosyl trisaccharide dependent manner. Elongates the glucuronyl-beta-1,4-xylose-beta disaccharide primer structure by adding repeating units [-3-Xylose-alpha-1,3-GlcA-beta-1-] to produce a heteropolysaccharide. Supports the maturation of DAG1 more effectively than LARGE1. In addition, can modify both heparan sulfate (HS)- and chondroitin/dermatan sulfate (CS/DS)-proteoglycans (PGs), namely GPC4, with a glycosaminoglycan (GAG)-like polysaccharide composed of xylose and glucuronic acid to confer laminin binding. The sequence is that of Xylosyl- and glucuronyltransferase LARGE2 from Homo sapiens (Human).